Consider the following 98-residue polypeptide: MERILKPVFLAILIVLSFSSQCMGFGESCQAGKHIVPVGQQQIDSSTCTLYKCSNYNRKYALETTSCATLKMKSGCRMVPGAATAPFPNCCPMMMCKG.

The N-terminal stretch at 1–24 (MERILKPVFLAILIVLSFSSQCMG) is a signal peptide. K97 carries the lysine amide modification.

It belongs to the scorpion La1-like peptide family. Post-translationally, contains 4 disulfide bonds. Expressed by the venom gland.

Its subcellular location is the secreted. This chain is La1-like protein 13, found in Urodacus yaschenkoi (Inland robust scorpion).